We begin with the raw amino-acid sequence, 105 residues long: DNA-binding transcriptional regulator BolA (105 aa).

This sequence belongs to the BolA/IbaG family.

Transcriptional regulator that plays an important role in general stress response. Has many effects on cell morphology, cell growth and cell division. Acts by regulating the transcription of many genes, including dacA (PBP-5), dacC (PBP-6), ampC and mreB. Probably involved in the coordination of genes that adapt the cell physiology in order to enhance cell adaptation and survival under stress conditions. Essential for normal cell morphology in stationary phase and under conditions of starvation. Also regulates a complex network of genes encoding proteins related to biofilm development, and negatively modulates flagellar biosynthesis and swimming capacity. Could be a motile/adhesive transcriptional switch, specifically involved in the transition between the planktonic and the attachment stage of biofilm formation. Overexpression produces round cell shape, impairs cell growth rate and induces biofilm development. The polypeptide is DNA-binding transcriptional regulator BolA (Escherichia coli (strain K12)).